A 193-amino-acid polypeptide reads, in one-letter code: Holliday junction branch migration complex subunit RuvA (193 aa).

Residues 1–63 form a domain I region; sequence MIHHLKGQLI…EDSHTLYGFA (63 aa). The interval 64–142 is domain II; it reads EKSEREIFRL…KVLGDDEVFV (79 aa). The flexible linker stretch occupies residues 143–145; sequence SQS. The segment at 145 to 193 is domain III; it reads SNTNKEEALSALEILGYNRRQAGKVVEKILKEDPESTVESIIKMALKKL.

It belongs to the RuvA family. Homotetramer. Forms an RuvA(8)-RuvB(12)-Holliday junction (HJ) complex. HJ DNA is sandwiched between 2 RuvA tetramers; dsDNA enters through RuvA and exits via RuvB. An RuvB hexamer assembles on each DNA strand where it exits the tetramer. Each RuvB hexamer is contacted by two RuvA subunits (via domain III) on 2 adjacent RuvB subunits; this complex drives branch migration. In the full resolvosome a probable DNA-RuvA(4)-RuvB(12)-RuvC(2) complex forms which resolves the HJ.

It is found in the cytoplasm. Functionally, the RuvA-RuvB-RuvC complex processes Holliday junction (HJ) DNA during genetic recombination and DNA repair, while the RuvA-RuvB complex plays an important role in the rescue of blocked DNA replication forks via replication fork reversal (RFR). RuvA specifically binds to HJ cruciform DNA, conferring on it an open structure. The RuvB hexamer acts as an ATP-dependent pump, pulling dsDNA into and through the RuvAB complex. HJ branch migration allows RuvC to scan DNA until it finds its consensus sequence, where it cleaves and resolves the cruciform DNA. The chain is Holliday junction branch migration complex subunit RuvA from Christiangramia forsetii (strain DSM 17595 / CGMCC 1.15422 / KT0803) (Gramella forsetii).